A 525-amino-acid polypeptide reads, in one-letter code: Arylsulfatase G (525 aa).

Positions methionine 1–serine 16 are cleaved as a signal peptide. Ca(2+)-binding residues include aspartate 44, aspartate 45, and cysteine 84. Residue cysteine 84 is the Nucleophile of the active site. A 3-oxoalanine (Cys) modification is found at cysteine 84. A glycan (N-linked (GlcNAc...) asparagine) is linked at asparagine 117. Residue lysine 137 coordinates substrate. Histidine 139 is an active-site residue. Residue serine 162 participates in substrate binding. The N-linked (GlcNAc...) asparagine glycan is linked to asparagine 215. Histidine 251 is a substrate binding site. Residues aspartate 302 and asparagine 303 each coordinate Ca(2+). Residues asparagine 356 and asparagine 497 are each glycosylated (N-linked (GlcNAc...) asparagine).

Belongs to the sulfatase family. Requires Ca(2+) as cofactor. In terms of processing, N-glycosylated. N-glycosylated with both high mannose and complex type sugars. Post-translationally, the conversion to 3-oxoalanine (also known as C-formylglycine, FGly), of a serine or cysteine residue in prokaryotes and of a cysteine residue in eukaryotes, is critical for catalytic activity. The 63-kDa precursor undergoes proteolytic processing in two steps, yielding two fragments in the first step (apparent molecular masses of 44 and 18 kDa). In the second step, the 44-kDa fragment is processed further to the 34- and 10-kDa chains. The 10-kDa chain is a cleavage product of the 44-kDa fragment but linked to the 18-kDa chain through a disulfide bridge. As to expression, widely expressed, with very low expression in brain, lung, heart and skeletal muscle.

The protein resides in the lysosome. It carries out the reaction an aryl sulfate + H2O = a phenol + sulfate + H(+). The catalysed reaction is Hydrolysis of the 3-sulfate groups of the N-sulfo-D-glucosamine 3-O-sulfate units of heparin.. Inhibited by phosphate. The phosphate forms a covalent bond with the active site 3-oxoalanine. In terms of biological role, displays arylsulfatase activity at acidic pH towards artificial substrates, such as p-nitrocatechol sulfate and also, but with a lower activity towards p-nitrophenyl sulfate and 4-methylumbelliferyl sulfate. Catalyzes the hydrolysis of the 3-sulfate groups of the N-sulfo-D-glucosamine 3-O-sulfate units of heparin. The polypeptide is Arylsulfatase G (ARSG) (Homo sapiens (Human)).